A 200-amino-acid polypeptide reads, in one-letter code: Holliday junction branch migration complex subunit RuvA (200 aa).

The tract at residues 1–64 (MFTYFRGELI…EDLMQLFGFL (64 aa)) is domain I. The interval 65-143 (EEEERQLFRL…KLRPSGGTKS (79 aa)) is domain II. Residues 144-148 (VSRLS) form a flexible linker region. The interval 148-200 (SESSMRDDAVNALVTLGFLRSVAQKAVTESLTSLRNPQVEDLVRDALLTIRTP) is domain III.

This sequence belongs to the RuvA family. Homotetramer. Forms an RuvA(8)-RuvB(12)-Holliday junction (HJ) complex. HJ DNA is sandwiched between 2 RuvA tetramers; dsDNA enters through RuvA and exits via RuvB. An RuvB hexamer assembles on each DNA strand where it exits the tetramer. Each RuvB hexamer is contacted by two RuvA subunits (via domain III) on 2 adjacent RuvB subunits; this complex drives branch migration. In the full resolvosome a probable DNA-RuvA(4)-RuvB(12)-RuvC(2) complex forms which resolves the HJ.

Its subcellular location is the cytoplasm. The RuvA-RuvB-RuvC complex processes Holliday junction (HJ) DNA during genetic recombination and DNA repair, while the RuvA-RuvB complex plays an important role in the rescue of blocked DNA replication forks via replication fork reversal (RFR). RuvA specifically binds to HJ cruciform DNA, conferring on it an open structure. The RuvB hexamer acts as an ATP-dependent pump, pulling dsDNA into and through the RuvAB complex. HJ branch migration allows RuvC to scan DNA until it finds its consensus sequence, where it cleaves and resolves the cruciform DNA. This chain is Holliday junction branch migration complex subunit RuvA, found in Chlorobium phaeobacteroides (strain BS1).